Here is a 374-residue protein sequence, read N- to C-terminus: Potassium channel subfamily K member 9 (374 aa).

Topologically, residues 1–8 (MKRQNVRT) are cytoplasmic. Residues 9-29 (LSLIICTFTYLLVGAAVFDAL) form a helical membrane-spanning segment. Residues 30-88 (ESDYEMREEEKLKAEEIRLKGKYNISSEDYRQLELVIMQSEPHRAGVQWKFAGSFYFAI) lie on the Extracellular side of the membrane. N53 carries an N-linked (GlcNAc...) asparagine glycan. The pore-forming intramembrane region spans 89 to 101 (TVITTIGYGHAAP). The Extracellular segment spans residues 102–107 (GTDAGK). Residues 108 to 128 (AFCMFYAVLGIPLTLVMFQSL) form a helical membrane-spanning segment. The Cytoplasmic portion of the chain corresponds to 129–158 (GERMNTFVKYLLKRIKKCCGMHSTDVSMEN). Residues 159–179 (MVTVGFFSCMGTLCIGAAAFS) form a helical membrane-spanning segment. The Extracellular segment spans residues 180–194 (HYEEWSFFQAYYYCF). Residues 195 to 207 (ITLTTIGFGDYVA) constitute an intramembrane region (pore-forming). The Extracellular portion of the chain corresponds to 208 to 218 (LQKNRALQKKP). A helical transmembrane segment spans residues 219 to 239 (LYVAFSFMYILVGLTVIGAFL). The Cytoplasmic portion of the chain corresponds to 240–374 (NLVVLRFLTM…HRLMKRRKSI (135 aa)).

This sequence belongs to the two pore domain potassium channel (TC 1.A.1.8) family. As to quaternary structure, homodimer. May form heterodimers with other family members.

The protein localises to the cell membrane. Its function is as follows. pH-dependent, voltage-insensitive, background potassium channel protein. This Xenopus laevis (African clawed frog) protein is Potassium channel subfamily K member 9 (kcnk9).